We begin with the raw amino-acid sequence, 65 residues long: Large ribosomal subunit protein bL35 (65 aa).

Belongs to the bacterial ribosomal protein bL35 family.

The protein is Large ribosomal subunit protein bL35 of Caldicellulosiruptor bescii (strain ATCC BAA-1888 / DSM 6725 / KCTC 15123 / Z-1320) (Anaerocellum thermophilum).